The primary structure comprises 230 residues: Response regulator MprA (230 aa).

A Response regulatory domain is found at 4–118 (RILVVDDDRA…ELLARMRALL (115 aa)). 4-aspartylphosphate is present on Asp48. The segment at residues 129–227 (SMAMRFSDLT…VRGVGYVLRE (99 aa)) is a DNA-binding region (ompR/PhoB-type).

Phosphorylated and dephosphorylated by MprB.

It localises to the cytoplasm. In terms of biological role, member of the two-component regulatory system MprB/MprA which contributes to maintaining a balance among several systems involved in stress resistance and is required for establishment and maintenance of persistent infection in the host. Functions as a transcriptional regulator that recognizes a 19-bp nucleotide motif comprizing two loosely conserved 8-bp direct DNA-binding motif repeats separated by a 3-bp spacer region. In Mycobacterium tuberculosis (strain ATCC 25177 / H37Ra), this protein is Response regulator MprA (mprA).